The primary structure comprises 122 residues: Large ribosomal subunit protein uL14 (122 aa).

This sequence belongs to the universal ribosomal protein uL14 family. Part of the 50S ribosomal subunit. Forms a cluster with proteins L3 and L19. In the 70S ribosome, L14 and L19 interact and together make contacts with the 16S rRNA in bridges B5 and B8.

Binds to 23S rRNA. Forms part of two intersubunit bridges in the 70S ribosome. The sequence is that of Large ribosomal subunit protein uL14 from Symbiobacterium thermophilum (strain DSM 24528 / JCM 14929 / IAM 14863 / T).